We begin with the raw amino-acid sequence, 228 residues long: Endo-1,4-beta-xylanase B (228 aa).

Residues 1–19 (MVSFTYLLAAVSAVTGAVA) form the signal peptide. Residues 37 to 227 (KRTSPTTGVN…SSGQATMTVS (191 aa)) enclose the GH11 domain. Residue Glu-122 is the Nucleophile of the active site. Glu-214 functions as the Proton donor in the catalytic mechanism.

Belongs to the glycosyl hydrolase 11 (cellulase G) family.

The protein localises to the secreted. The enzyme catalyses Endohydrolysis of (1-&gt;4)-beta-D-xylosidic linkages in xylans.. It functions in the pathway glycan degradation; xylan degradation. Its activity is regulated as follows. Inhibited by the proteinaceous endoxylanase inhibitor I from T.aestivum (TAXI-I). Endo-1,4-beta-xylanase involved in the hydrolysis of xylan, a major structural heterogeneous polysaccharide found in plant biomass representing the second most abundant polysaccharide in the biosphere, after cellulose. Plays an important role in causing fusarium head blight (FHB) on cereal crops. Induces cell death and hydrogen peroxide accumulation in infected wheat leaves. The chain is Endo-1,4-beta-xylanase B (XYLB) from Gibberella zeae (strain ATCC MYA-4620 / CBS 123657 / FGSC 9075 / NRRL 31084 / PH-1) (Wheat head blight fungus).